An 882-amino-acid polypeptide reads, in one-letter code: Isoamylase 2, chloroplastic (882 aa).

The N-terminal 70 residues, methionine 1–cysteine 70, are a transit peptide targeting the chloroplast.

Belongs to the glycosyl hydrolase 13 family. Associates with ISA1 to form the heteromultimeric complex Iso1 required for amylopectin synthesis.

It localises to the plastid. It is found in the chloroplast. The protein operates within glycan biosynthesis; starch biosynthesis. Involved in the trimming of pre-amylopectin chains. Accelerates the crystallization of nascent amylopectin molecules during starch synthesis. ISA1 and ISA2 work exclusively together as a multimeric holoenzyme. ISA1-ISA2 removes preferentially branches that are very close to other branches. This chain is Isoamylase 2, chloroplastic (ISA2), found in Arabidopsis thaliana (Mouse-ear cress).